The following is a 33-amino-acid chain: Dermaseptin-H6 (33 aa).

Residue Leu-33 is modified to Leucine amide.

Expressed by the skin glands.

The protein localises to the secreted. Functionally, has antimicrobial activity. This Pithecopus hypochondrialis (Orange-legged leaf frog) protein is Dermaseptin-H6.